The primary structure comprises 347 residues: Quinolinate synthase (347 aa).

Iminosuccinate is bound by residues H47 and S68. C113 serves as a coordination point for [4Fe-4S] cluster. Iminosuccinate-binding positions include 139-141 (YAN) and S156. C200 serves as a coordination point for [4Fe-4S] cluster. Iminosuccinate-binding positions include 226–228 (HPE) and T243. [4Fe-4S] cluster is bound at residue C297.

It belongs to the quinolinate synthase family. Type 1 subfamily. It depends on [4Fe-4S] cluster as a cofactor.

The protein localises to the cytoplasm. The enzyme catalyses iminosuccinate + dihydroxyacetone phosphate = quinolinate + phosphate + 2 H2O + H(+). It participates in cofactor biosynthesis; NAD(+) biosynthesis; quinolinate from iminoaspartate: step 1/1. Functionally, catalyzes the condensation of iminoaspartate with dihydroxyacetone phosphate to form quinolinate. This is Quinolinate synthase from Salmonella heidelberg (strain SL476).